The sequence spans 100 residues: Urease subunit gamma (100 aa).

Belongs to the urease gamma subunit family. As to quaternary structure, heterotrimer of UreA (gamma), UreB (beta) and UreC (alpha) subunits. Three heterotrimers associate to form the active enzyme.

The protein localises to the cytoplasm. The enzyme catalyses urea + 2 H2O + H(+) = hydrogencarbonate + 2 NH4(+). Its pathway is nitrogen metabolism; urea degradation; CO(2) and NH(3) from urea (urease route): step 1/1. The polypeptide is Urease subunit gamma (Prochlorococcus marinus (strain NATL1A)).